The following is a 323-amino-acid chain: DNA repair and recombination protein RadA (323 aa).

Position 114–121 (114–121 (GEFGSGKT)) interacts with ATP.

This sequence belongs to the eukaryotic RecA-like protein family.

Functionally, involved in DNA repair and in homologous recombination. Binds and assemble on single-stranded DNA to form a nucleoprotein filament. Hydrolyzes ATP in a ssDNA-dependent manner and promotes DNA strand exchange between homologous DNA molecules. This is DNA repair and recombination protein RadA from Picrophilus torridus (strain ATCC 700027 / DSM 9790 / JCM 10055 / NBRC 100828 / KAW 2/3).